A 103-amino-acid chain; its full sequence is CLAVATA3/ESR (CLE)-related protein 22 (103 aa).

A signal peptide spans 1–34; that stretch reads MGNYYSRRKSRKHITTVALIILLLLLFLFLYAKA. Positions 37-103 are disordered; sequence SSPNIHHHST…FTGPNPLHNR (67 aa). The span at 41–50 shows a compositional bias: basic residues; the sequence is IHHHSTHGSL. A compositionally biased stretch (polar residues) spans 66 to 76; sequence NAASSRGSKYT. Pro97 is modified (hydroxyproline). An O-linked (Ara...) hydroxyproline glycan is attached at Pro97.

Belongs to the CLV3/ESR signal peptide family. Post-translationally, the O-glycosylation (arabinosylation) of the hydroxyproline Pro-97 enhances binding affinity of the CLE22p peptide for its receptor. In terms of tissue distribution, mostly expressed in stems and apex, and, to a lower extent, in seedlings, leaves, flowers and siliques.

It is found in the secreted. It localises to the extracellular space. Extracellular signal peptide that regulates cell fate. Represses root apical meristem maintenance. The chain is CLAVATA3/ESR (CLE)-related protein 22 from Arabidopsis thaliana (Mouse-ear cress).